A 533-amino-acid polypeptide reads, in one-letter code: DELLA protein 2 (533 aa).

Over residues Met1–Met12 the composition is skewed to basic and acidic residues. The disordered stretch occupies residues Met1–Glu24. Residues Asp31–Ala35 carry the DELLA motif motif. One can recognise a GRAS domain in the interval Val157–Lys522. The leucine repeat I (LRI) stretch occupies residues Ile164 to Ile218. Residues Leu166 to Met203 form a required for possible homodimerization region. The LxCxE motif; degenerate motif lies at Met171–Glu175. The interval Gln232–Gly297 is VHIID. Residues Val263–Asp267 carry the VHIID motif. Positions Gln311–Ser343 are leucine repeat II (LRII). Residues Val355–Asn443 are PFYRE. The short motif at Leu363–Asn367 is the LXXLL motif; degenerate element. The interval Ala446–Lys522 is SAW.

This sequence belongs to the GRAS family. DELLA subfamily. As to quaternary structure, may be a homodimer. Post-translationally, ubiquitinated. Upon GA application it is ubiquitinated, leading to its subsequent degradation.

It is found in the nucleus. Its function is as follows. Probable transcriptional regulator that acts as a repressor of the gibberellin (GA) signaling pathway. Probably acts by participating in large multiprotein complexes that repress transcription of GA-inducible genes. Upon GA application, it is degraded by the proteasome, allowing the GA signaling pathway. Together with DELLA1, required to enable arbuscule development during arbuscular mycorrhizal (AM) symbiosis with AM fungi (e.g. Glomus versiforme) via the regulation of RAM1 which, in turn, regulates various AM genes (e.g. NSP1, NSP2, PT4, LEC5, RAM2, EXO70I, STR and RAD1). The chain is DELLA protein 2 from Medicago truncatula (Barrel medic).